We begin with the raw amino-acid sequence, 841 residues long: Probable inorganic carbon transporter subunit DabA 1 (841 aa).

Residues Cys352, Asp354, His536, and Cys551 each contribute to the Zn(2+) site.

Belongs to the inorganic carbon transporter (TC 9.A.2) DabA family. Forms a complex with DabB. The cofactor is Zn(2+).

The protein resides in the cell inner membrane. Part of an energy-coupled inorganic carbon pump. This Bradyrhizobium sp. (strain ORS 278) protein is Probable inorganic carbon transporter subunit DabA 1.